Consider the following 217-residue polypeptide: Glutathione S-transferase U20 (217 aa).

Positions 3–82 (NLPILLDYWP…YVDEAWPEKN (80 aa)) constitute a GST N-terminal domain. S13, I54, and S67 together coordinate glutathione. Positions 88 to 208 (DPYGRAQARF…LPDSEKIVAY (121 aa)) constitute a GST C-terminal domain.

The protein belongs to the GST superfamily. Tau family. As to quaternary structure, homodimerization. Interacts with JAR1/FIN219 under continuous far red (cFR) light to stimulate JAR1/FIN219 activity and substrate selectivity. Mostly associated with vascular tissues, especially near hydathodes.

The protein localises to the nucleus. Its subcellular location is the cytoplasm. It localises to the cytosol. The enzyme catalyses RX + glutathione = an S-substituted glutathione + a halide anion + H(+). Activated by JAR1/FIN219. Exhibits glutathione-dependent thiol transferase activities. Can use glutathione (GSH) and 1-chloro-2,4-dinitrobenzene (CDNB) as substrates. Involved in the regulation of far-red light influence on development. Regulator of the interplay between light and JA signaling by increasing JAR1/FIN219 efficiency. Maybe involved in gravitropic signal transduction. The chain is Glutathione S-transferase U20 from Arabidopsis thaliana (Mouse-ear cress).